Consider the following 116-residue polypeptide: MPNYRGGRINEEFKREISNIIQNEIKDPRLTAMISVTDVKVTKDLKYAKVYVSIFSTKEEEKKDNFTALKSASGFIRKILGQRINVRHNPEILFELDDSINYAMHIDELIQKVKDK.

It belongs to the RbfA family. In terms of assembly, monomer. Binds 30S ribosomal subunits, but not 50S ribosomal subunits or 70S ribosomes.

The protein localises to the cytoplasm. Its function is as follows. One of several proteins that assist in the late maturation steps of the functional core of the 30S ribosomal subunit. Associates with free 30S ribosomal subunits (but not with 30S subunits that are part of 70S ribosomes or polysomes). Required for efficient processing of 16S rRNA. May interact with the 5'-terminal helix region of 16S rRNA. This chain is Ribosome-binding factor A, found in Clostridium botulinum (strain Eklund 17B / Type B).